A 334-amino-acid polypeptide reads, in one-letter code: S-adenosylmethionine decarboxylase proenzyme (334 aa).

Phenylalanine 7 provides a ligand contact to substrate. Residues glutamate 8 and glutamate 11 contribute to the active site. A substrate-binding site is contributed by glutamate 67. Residue serine 68 is the Schiff-base intermediate with substrate; via pyruvic acid of the active site. Serine 68 carries the pyruvic acid (Ser); by autocatalysis modification. The active-site Proton donor; for catalytic activity is the cysteine 82. Phenylalanine 223 is a binding site for substrate. Active-site proton acceptor; for processing activity residues include serine 229 and histidine 243. Substrate is bound at residue glutamate 247. Position 298 is a phosphoserine (serine 298).

It belongs to the eukaryotic AdoMetDC family. In terms of assembly, heterotetramer of two alpha and two beta chains. Pyruvate serves as cofactor. In terms of processing, is synthesized initially as an inactive proenzyme. Formation of the active enzyme involves a self-maturation process in which the active site pyruvoyl group is generated from an internal serine residue via an autocatalytic post-translational modification. Two non-identical subunits are generated from the proenzyme in this reaction, and the pyruvate is formed at the N-terminus of the alpha chain, which is derived from the carboxyl end of the proenzyme. The post-translation cleavage follows an unusual pathway, termed non-hydrolytic serinolysis, in which the side chain hydroxyl group of the serine supplies its oxygen atom to form the C-terminus of the beta chain, while the remainder of the serine residue undergoes an oxidative deamination to produce ammonia and the pyruvoyl group blocking the N-terminus of the alpha chain.

The enzyme catalyses S-adenosyl-L-methionine + H(+) = S-adenosyl 3-(methylsulfanyl)propylamine + CO2. The protein operates within amine and polyamine biosynthesis; S-adenosylmethioninamine biosynthesis; S-adenosylmethioninamine from S-adenosyl-L-methionine: step 1/1. In terms of biological role, essential for biosynthesis of the polyamines spermidine and spermine. Promotes maintenance and self-renewal of embryonic stem cells, by maintaining spermine levels. The polypeptide is S-adenosylmethionine decarboxylase proenzyme (AMD1) (Mesocricetus auratus (Golden hamster)).